We begin with the raw amino-acid sequence, 476 residues long: DnaJ homolog subfamily C member 7 homolog (476 aa).

A disordered region spans residues M1–L22. Polar residues predominate over residues T7–E18. 7 TPR repeats span residues A23–S56, A59–V92, M143–N176, V177–C210, L223–N256, A261–Y294, and L295–D328. The J domain maps to D349–V414.

The protein resides in the cytoplasm. The sequence is that of DnaJ homolog subfamily C member 7 homolog from Schizosaccharomyces pombe (strain 972 / ATCC 24843) (Fission yeast).